The following is a 105-amino-acid chain: Protein S100-A11 (105 aa).

Met-1 carries the N-acetylmethionine modification. Ala-2 is modified (N-acetylalanine; in Protein S100-A11, N-terminally processed). The residue at position 3 (Lys-3) is an N6-acetyllysine. 2 positions are modified to phosphoserine: Ser-5 and Ser-6. Thr-10 carries the phosphothreonine modification. EF-hand domains are found at residues 13–49 (CIES…ELAA) and 55–90 (KDPG…LAMA). The residue at position 27 (Lys-27) is an N6-acetyllysine. The Ca(2+) site is built by Thr-33, Glu-38, Asp-68, Asn-70, Asp-72, Gln-74, and Glu-79.

This sequence belongs to the S-100 family. In terms of assembly, homodimer; disulfide-linked. In terms of processing, phosphorylation at Thr-10 by PRKCA significantly suppresses homodimerization and promotes association with NCL/nucleolin which induces nuclear translocation.

It localises to the cytoplasm. Its subcellular location is the nucleus. In terms of biological role, facilitates the differentiation and the cornification of keratinocytes. The sequence is that of Protein S100-A11 (S100A11) from Homo sapiens (Human).